The sequence spans 975 residues: Translation initiation factor IF-2 (975 aa).

The span at 48–63 (DHLRKSHGATDGDKRK) shows a compositional bias: basic and acidic residues. Disordered regions lie at residues 48-84 (DHLR…GKAR) and 98-388 (KRDD…QAPT). Positions 104–115 (ETGADQAQAQTD) are enriched in low complexity. Over residues 120–177 (AELKRREEEARREAELLEKQAQELRERQERLEREEAERRAREEAAEAERRRAEEEAAA) the composition is skewed to basic and acidic residues. Positions 178–211 (KRAAAAQAEAAQQAAAAREQAQRAQSEPAEQSAQ) are enriched in low complexity. The segment covering 212–263 (DEARAAAERAAQREAAKKAEDAAREAADKARAEQEEIRKRREAAEAEARAIR) has biased composition (basic and acidic residues). The span at 302–330 (KPAGEAAAARPAAKKPASGAPAPAAAPAG) shows a compositional bias: low complexity. Over residues 359–372 (SSGGVDRGWRGGPK) the composition is skewed to gly residues. The region spanning 475–644 (PRPPVVTVMG…LLQAEVLELK (170 aa)) is the tr-type G domain. The tract at residues 484–491 (GHVDHGKT) is G1. 484–491 (GHVDHGKT) provides a ligand contact to GTP. Residues 509-513 (GITQH) form a G2 region. Residues 530 to 533 (DTPG) form a G3 region. Residues 530-534 (DTPGH) and 584-587 (NKID) contribute to the GTP site. The G4 stretch occupies residues 584 to 587 (NKID). Positions 620–622 (SAK) are G5.

This sequence belongs to the TRAFAC class translation factor GTPase superfamily. Classic translation factor GTPase family. IF-2 subfamily.

The protein localises to the cytoplasm. Functionally, one of the essential components for the initiation of protein synthesis. Protects formylmethionyl-tRNA from spontaneous hydrolysis and promotes its binding to the 30S ribosomal subunits. Also involved in the hydrolysis of GTP during the formation of the 70S ribosomal complex. In Burkholderia mallei (strain NCTC 10247), this protein is Translation initiation factor IF-2.